Here is a 241-residue protein sequence, read N- to C-terminus: NH(3)-dependent NAD(+) synthetase (241 aa).

29–36 (GISGGIDS) contributes to the ATP binding site. Asp35 contacts Mg(2+). Arg110 provides a ligand contact to deamido-NAD(+). Glu135 contacts Mg(2+). Residues Lys143 and Asp150 each contribute to the deamido-NAD(+) site. The ATP site is built by Lys159 and Ser181. Position 226–227 (226–227 (HK)) interacts with deamido-NAD(+).

It belongs to the NAD synthetase family. Homodimer.

The catalysed reaction is deamido-NAD(+) + NH4(+) + ATP = AMP + diphosphate + NAD(+) + H(+). Its pathway is cofactor biosynthesis; NAD(+) biosynthesis; NAD(+) from deamido-NAD(+) (ammonia route): step 1/1. Functionally, catalyzes the ATP-dependent amidation of deamido-NAD to form NAD. Uses ammonia as a nitrogen source. In Finegoldia magna (strain ATCC 29328 / DSM 20472 / WAL 2508) (Peptostreptococcus magnus), this protein is NH(3)-dependent NAD(+) synthetase.